Reading from the N-terminus, the 215-residue chain is ATP-dependent Clp protease proteolytic subunit (215 aa).

S115 (nucleophile) is an active-site residue. Residue H140 is part of the active site.

It belongs to the peptidase S14 family. In terms of assembly, fourteen ClpP subunits assemble into 2 heptameric rings which stack back to back to give a disk-like structure with a central cavity, resembling the structure of eukaryotic proteasomes.

It is found in the cytoplasm. The enzyme catalyses Hydrolysis of proteins to small peptides in the presence of ATP and magnesium. alpha-casein is the usual test substrate. In the absence of ATP, only oligopeptides shorter than five residues are hydrolyzed (such as succinyl-Leu-Tyr-|-NHMec, and Leu-Tyr-Leu-|-Tyr-Trp, in which cleavage of the -Tyr-|-Leu- and -Tyr-|-Trp bonds also occurs).. In terms of biological role, cleaves peptides in various proteins in a process that requires ATP hydrolysis. Has a chymotrypsin-like activity. Plays a major role in the degradation of misfolded proteins. The chain is ATP-dependent Clp protease proteolytic subunit from Anaplasma marginale (strain Florida).